The primary structure comprises 463 residues: POU domain, class 2, transcription factor 2 (463 aa).

5 disordered regions span residues 1-87 (MVHS…QPHL), 159-182 (QPRA…EEPS), 259-282 (SSLP…GRRR), 341-376 (PCSA…LSQA), and 393-463 (TLHP…PYQP). The segment covering 12-37 (RMSKPLEAEKQSLDSPSEHTDTERNG) has biased composition (basic and acidic residues). Positions 41–60 (NHQNPQNKASPFSVSPTGPS) are enriched in polar residues. Positions 75–85 (AAPPPPQPAQP) are enriched in pro residues. A POU-specific domain is found at 179–253 (EEPSDLEELE…LLEKWLNDAE (75 aa)). Residues 259 to 272 (SSLPSPNQLSSPSL) show a composition bias toward low complexity. A DNA-binding region (homeobox) is located at residues 281-340 (RRKKRTSIETNVRFALEKSFLANQKPTSEEILLIAEQLHMEKEVIRVWFCNRRQKEKRIN). Positions 373-394 (LSQASSSLSTTVTTLSSAVGTL) are leucine-zipper. Positions 400–409 (AGGGGGGGGA) are enriched in gly residues.

Belongs to the POU transcription factor family. Class-2 subfamily. In terms of assembly, interacts with NR3C1, AR and PGR. Interacts with POU2AF1; the interaction increases POU2F2 transactivation activity. Highest in B cells, but also present in brain (neuronal and glial cells), intestine, kidney, and testes. As to expression, expressed at higher levels in B-cells than in neuronal cells. In terms of tissue distribution, expressed in neuronal cell lines and brain, but not dorsal root ganglia. Expressed at lower levels in neuronal cells than in B cells. As to expression, expressed in neuronal cell lines, and at lower levels in neuroblastoma and dorsal root ganglia. In terms of tissue distribution, widely expressed in the developing nervous system but expression is confined to very specific regions in the adult brain, it is expressed at a lower level in B cells. Either absent in, or expressed at very low levels in neuronal cells and brain. As to expression, expressed in all tissues tested: mammary gland, liver, spleen, lung, kidney intestine, uterus and ovary of a virgin mouse. Levels of isoform OCT2.7 are highest in spleen and lung. In mammary gland, expression is localized to the alveolus epithelial cells.

It is found in the cytoplasm. The protein resides in the nucleus. With respect to regulation, transactivation activity is enhanced by transcriptional coactivator POU2AF1. In terms of biological role, transcription factor that specifically binds to the octamer motif (5'-ATTTGCAT-3'). Regulates IL6 expression in B cells with POU2AF1. Regulates transcription in a number of tissues in addition to activating immunoglobulin gene expression. Modulates transcription transactivation by NR3C1, AR and PGR. Its function is as follows. Activates octamer-containing promoters. Represses some promoters and activate others. Functionally, represses some promoters and activate others. Activates the U2 small nuclear RNA (snRNA) promoter. In terms of biological role, unable to bind to the octamer motif, but can still activate the beta-casein gene promoter at low levels. This chain is POU domain, class 2, transcription factor 2, found in Mus musculus (Mouse).